The following is a 125-amino-acid chain: Large ribosomal subunit protein eL31 (125 aa).

The protein belongs to the eukaryotic ribosomal protein eL31 family. As to quaternary structure, component of the large ribosomal subunit.

It is found in the cytoplasm. Functionally, component of the large ribosomal subunit. The ribosome is a large ribonucleoprotein complex responsible for the synthesis of proteins in the cell. This chain is Large ribosomal subunit protein eL31 (rpl31), found in Xenopus laevis (African clawed frog).